Here is a 463-residue protein sequence, read N- to C-terminus: Exodeoxyribonuclease 7 large subunit (463 aa).

Belongs to the XseA family. As to quaternary structure, heterooligomer composed of large and small subunits.

The protein localises to the cytoplasm. It carries out the reaction Exonucleolytic cleavage in either 5'- to 3'- or 3'- to 5'-direction to yield nucleoside 5'-phosphates.. Bidirectionally degrades single-stranded DNA into large acid-insoluble oligonucleotides, which are then degraded further into small acid-soluble oligonucleotides. The polypeptide is Exodeoxyribonuclease 7 large subunit (Bordetella pertussis (strain Tohama I / ATCC BAA-589 / NCTC 13251)).